Here is a 101-residue protein sequence, read N- to C-terminus: Small ribosomal subunit protein uS14 (101 aa).

It belongs to the universal ribosomal protein uS14 family. As to quaternary structure, part of the 30S ribosomal subunit. Contacts proteins S3 and S10.

Binds 16S rRNA, required for the assembly of 30S particles and may also be responsible for determining the conformation of the 16S rRNA at the A site. The chain is Small ribosomal subunit protein uS14 from Protochlamydia amoebophila (strain UWE25).